The sequence spans 460 residues: Transcription factor AP-2-beta (460 aa).

Residue Lys-21 forms a Glycyl lysine isopeptide (Lys-Gly) (interchain with G-Cter in SUMO) linkage. The interval 30 to 139 (HDGVPSHSSR…PQLSGLDPRR (110 aa)) is disordered. A compositionally biased stretch (polar residues) spans 35–51 (SHSSRLSQLGSVSQGPY). Over residues 121-132 (LLPQPRAALPQL) the composition is skewed to low complexity. The residue at position 258 (Ser-258) is a Phosphoserine; by PKA. A disordered region spans residues 435 to 460 (NTTTNRHTSGEGPGSKTGDKEEKHRK). Positions 451-460 (TGDKEEKHRK) are enriched in basic and acidic residues.

The protein belongs to the AP-2 family. In terms of assembly, binds DNA as a dimer. Can form homodimers or heterodimers with other AP-2 family members. Interacts with CITED4. Interacts with UBE2I. Interacts with KCTD1; this interaction represses transcription activation. Interacts with CITED2 (via C-terminus); the interaction stimulates TFAP2B-transcriptional activity. Sumoylated on Lys-21; which inhibits transcriptional activity.

The protein resides in the nucleus. Sequence-specific DNA-binding protein that interacts with inducible viral and cellular enhancer elements to regulate transcription of selected genes. AP-2 factors bind to the consensus sequence 5'-GCCNNNGGC-3' and activate genes involved in a large spectrum of important biological functions including proper eye, face, body wall, limb and neural tube development. They also suppress a number of genes including MCAM/MUC18, C/EBP alpha and MYC. AP-2-beta appears to be required for normal face and limb development and for proper terminal differentiation and function of renal tubular epithelia. The chain is Transcription factor AP-2-beta (TFAP2B) from Canis lupus familiaris (Dog).